Reading from the N-terminus, the 85-residue chain is Polcalcin Bet v 4 (85 aa).

EF-hand domains follow at residues 7–42 (QDKA…LGSI) and 42–77 (ITPD…NRGL). 9 residues coordinate Ca(2+): D20, N22, D24, K26, E31, D55, D57, D59, and E66.

As to quaternary structure, monomer.

The sequence is that of Polcalcin Bet v 4 (BETV4) from Betula pendula (European white birch).